We begin with the raw amino-acid sequence, 461 residues long: L-seryl-tRNA(Sec) selenium transferase (461 aa).

Lys294 is modified (N6-(pyridoxal phosphate)lysine).

This sequence belongs to the SelA family. Pyridoxal 5'-phosphate is required as a cofactor.

Its subcellular location is the cytoplasm. It catalyses the reaction L-seryl-tRNA(Sec) + selenophosphate + H(+) = L-selenocysteinyl-tRNA(Sec) + phosphate. It participates in aminoacyl-tRNA biosynthesis; selenocysteinyl-tRNA(Sec) biosynthesis; selenocysteinyl-tRNA(Sec) from L-seryl-tRNA(Sec) (bacterial route): step 1/1. Its function is as follows. Converts seryl-tRNA(Sec) to selenocysteinyl-tRNA(Sec) required for selenoprotein biosynthesis. This is L-seryl-tRNA(Sec) selenium transferase from Actinobacillus pleuropneumoniae serotype 5b (strain L20).